We begin with the raw amino-acid sequence, 263 residues long: Protein maestro (263 aa).

The tract at residues 1-21 (MDQTPRRMLGQPLSSPATQPK) is disordered. The HEAT repeat unit spans residues 128–163 (SFFIDITLQTRTLLDDENDSLRYSAFVLFGQLADLA).

It localises to the nucleus. It is found in the nucleolus. The polypeptide is Protein maestro (MRO) (Bos taurus (Bovine)).